A 325-amino-acid polypeptide reads, in one-letter code: Olfactory receptor 1S2 (325 aa).

Over 1 to 38 the chain is Extracellular; that stretch reads MKTLCSFLQISRNMHQENQTTITEFILLGLSNQAEHQN. Asn-18 carries an N-linked (GlcNAc...) asparagine glycan. A helical transmembrane segment spans residues 39-62; it reads LLFVLFLSMYVVTVVGNGLIIVAI. Residues 63–70 lie on the Cytoplasmic side of the membrane; that stretch reads SLDIYLHT. The chain crosses the membrane as a helical span at residues 71–92; the sequence is PMYLFLAYLSFADISSISNSVP. The Extracellular portion of the chain corresponds to 93 to 113; sequence KMLVNIQTNSQSISYESCITQ. A disulfide bond links Cys-110 and Cys-202. A helical membrane pass occupies residues 114–133; sequence MYFSIVFVVTDNLLLGTMAF. The Cytoplasmic portion of the chain corresponds to 134 to 152; the sequence is DHFVAICHPLNYTTFMRAR. A helical membrane pass occupies residues 153–171; that stretch reads FGTLLTVISWFLSNIIALT. At 172-208 the chain is on the extracellular side; that stretch reads HTLLLIQLLFCDHNTLPHFFCDLAPLLKLSCSDTMIN. A helical transmembrane segment spans residues 209–232; it reads ELVLFIVGLSVIIFPFVLIFFSYV. Residues 233–249 lie on the Cytoplasmic side of the membrane; sequence CIIRAVLGVSSTQGKWK. Residues 250-272 form a helical membrane-spanning segment; it reads AFSTCGSHLTIALLFYGTTVGVY. The Extracellular segment spans residues 273–285; sequence FFPSSTHPEDTDK. The chain crosses the membrane as a helical span at residues 286 to 305; the sequence is IGAVLFTVVTPMMNPFIYSL. The Cytoplasmic segment spans residues 306–325; the sequence is RNKDMKGALRKLINRKISSL.

This sequence belongs to the G-protein coupled receptor 1 family.

The protein localises to the cell membrane. In terms of biological role, odorant receptor. The polypeptide is Olfactory receptor 1S2 (OR1S2) (Homo sapiens (Human)).